The primary structure comprises 257 residues: Type III pantothenate kinase (257 aa).

5 to 12 contributes to the ATP binding site; it reads DIGNTNIK. Position 107-110 (107-110) interacts with substrate; the sequence is GSDR. Catalysis depends on aspartate 109, which acts as the Proton acceptor. Threonine 133 lines the ATP pocket.

This sequence belongs to the type III pantothenate kinase family. As to quaternary structure, homodimer. NH4(+) is required as a cofactor. Requires K(+) as cofactor.

It is found in the cytoplasm. The catalysed reaction is (R)-pantothenate + ATP = (R)-4'-phosphopantothenate + ADP + H(+). It participates in cofactor biosynthesis; coenzyme A biosynthesis; CoA from (R)-pantothenate: step 1/5. Functionally, catalyzes the phosphorylation of pantothenate (Pan), the first step in CoA biosynthesis. This is Type III pantothenate kinase from Ehrlichia ruminantium (strain Gardel).